A 362-amino-acid polypeptide reads, in one-letter code: Histidinol-phosphate aminotransferase (362 aa).

Residue lysine 218 is modified to N6-(pyridoxal phosphate)lysine.

Belongs to the class-II pyridoxal-phosphate-dependent aminotransferase family. Histidinol-phosphate aminotransferase subfamily. In terms of assembly, homodimer. It depends on pyridoxal 5'-phosphate as a cofactor.

It catalyses the reaction L-histidinol phosphate + 2-oxoglutarate = 3-(imidazol-4-yl)-2-oxopropyl phosphate + L-glutamate. The protein operates within amino-acid biosynthesis; L-histidine biosynthesis; L-histidine from 5-phospho-alpha-D-ribose 1-diphosphate: step 7/9. The polypeptide is Histidinol-phosphate aminotransferase (Ruegeria sp. (strain TM1040) (Silicibacter sp.)).